The chain runs to 192 residues: Peptidyl-tRNA hydrolase (192 aa).

Residue Tyr-17 coordinates tRNA. His-22 functions as the Proton acceptor in the catalytic mechanism. Residues Phe-68, Asn-70, and Asn-116 each contribute to the tRNA site.

This sequence belongs to the PTH family. Monomer.

The protein localises to the cytoplasm. It carries out the reaction an N-acyl-L-alpha-aminoacyl-tRNA + H2O = an N-acyl-L-amino acid + a tRNA + H(+). Its function is as follows. Hydrolyzes ribosome-free peptidyl-tRNAs (with 1 or more amino acids incorporated), which drop off the ribosome during protein synthesis, or as a result of ribosome stalling. In terms of biological role, catalyzes the release of premature peptidyl moieties from peptidyl-tRNA molecules trapped in stalled 50S ribosomal subunits, and thus maintains levels of free tRNAs and 50S ribosomes. The protein is Peptidyl-tRNA hydrolase of Xylella fastidiosa (strain M12).